The following is a 346-amino-acid chain: Insertion element IS476 uncharacterized 39.2 kDa protein (346 aa).

The tract at residues 1–50 (MVSARPAFISGGPSTGGWRPTRQAAERTGGPEHSIEEVAGRGAPGHRSAE) is disordered. Over residues 29-39 (GGPEHSIEEVA) the composition is skewed to basic and acidic residues. The Integrase catalytic domain occupies 169 to 329 (ASSMPNDTWS…IPPAQFAANY (161 aa)).

The chain is Insertion element IS476 uncharacterized 39.2 kDa protein from Xanthomonas euvesicatoria.